Consider the following 370-residue polypeptide: Histidinol-phosphate aminotransferase 1 (370 aa).

Lys222 carries the N6-(pyridoxal phosphate)lysine modification.

Belongs to the class-II pyridoxal-phosphate-dependent aminotransferase family. Histidinol-phosphate aminotransferase subfamily. As to quaternary structure, homodimer. It depends on pyridoxal 5'-phosphate as a cofactor.

It catalyses the reaction L-histidinol phosphate + 2-oxoglutarate = 3-(imidazol-4-yl)-2-oxopropyl phosphate + L-glutamate. It participates in amino-acid biosynthesis; L-histidine biosynthesis; L-histidine from 5-phospho-alpha-D-ribose 1-diphosphate: step 7/9. In Bacillus thuringiensis subsp. konkukian (strain 97-27), this protein is Histidinol-phosphate aminotransferase 1.